The primary structure comprises 639 residues: RNA polymerase II elongation factor ELL2 (639 aa).

4 disordered regions span residues 175 to 203 (DTVP…SVSQ), 291 to 326 (LNPS…SDFI), 378 to 416 (PSTH…SFSQ), and 439 to 513 (PSSA…EGCT). A compositionally biased stretch (polar residues) spans 291–317 (LNPSQNASTSRSESPLCSSKDAASSPQ). Positions 378–401 (PSTHLPVSNPPQTVNSNSNSPSTP) are enriched in low complexity. A compositionally biased stretch (basic residues) spans 457 to 469 (SHKKSKKKSKKHK). Positions 470–479 (EKDQIKKLDI) are enriched in basic and acidic residues. Over residues 480–490 (ETMEEKEEDLQ) the composition is skewed to acidic residues. Residues Ser501 and Ser579 each carry the phosphoserine modification. The region spanning 525-635 (PDYLIKYIAI…LIGEFDQQQA (111 aa)) is the OCEL domain.

The protein belongs to the ELL/occludin family. As to quaternary structure, component of the super elongation complex (SEC), at least composed of EAF1, EAF2, CDK9, MLLT3/AF9, AFF (AFF1 or AFF4), the P-TEFb complex and ELL (ELL, ELL2 or ELL3). Component of the little elongation complex (LEC), at least composed of ELL (ELL, ELL2 or ELL3), ZC3H8, ICE1 and ICE2. Interacts with AFF4; the interaction is direct and leads to stabilize ELL2 and prevent ELL2 ubiquitination. Interacts with EAF1 and EAF2. Ubiquitinated by SIAH1, leading to its degradation by the proteasome. Interaction with AFF4 stabilizes ELL2 and prevents ELL2 ubiquitination.

The protein resides in the nucleus. Elongation factor component of the super elongation complex (SEC), a complex required to increase the catalytic rate of RNA polymerase II transcription by suppressing transient pausing by the polymerase at multiple sites along the DNA. Component of the little elongation complex (LEC), a complex required to regulate small nuclear RNA (snRNA) gene transcription by RNA polymerase II and III. Plays a role in immunoglobulin secretion in plasma cells: directs efficient alternative mRNA processing, influencing both proximal poly(A) site choice and exon skipping, as well as immunoglobulin heavy chain (IgH) alternative processing. Probably acts by regulating histone modifications accompanying transition from membrane-specific to secretory IgH mRNA expression. In Mus musculus (Mouse), this protein is RNA polymerase II elongation factor ELL2 (Ell2).